A 359-amino-acid polypeptide reads, in one-letter code: Phospho-N-acetylmuramoyl-pentapeptide-transferase (359 aa).

Transmembrane regions (helical) follow at residues 26–46 (TIYG…WVIN), 73–93 (TMGG…WADL), 98–118 (ILIT…DDYL), 134–154 (FLVQ…CPDF), 166–186 (FTPD…VGTS), 197–217 (GLAI…AYVA), 234–254 (CGEI…FLWF), 261–281 (VFMG…IAVI), 286–306 (ILLL…IIQV), and 338–358 (IVRF…TLKI).

This sequence belongs to the glycosyltransferase 4 family. MraY subfamily. Requires Mg(2+) as cofactor.

It is found in the cell inner membrane. The enzyme catalyses UDP-N-acetyl-alpha-D-muramoyl-L-alanyl-gamma-D-glutamyl-meso-2,6-diaminopimeloyl-D-alanyl-D-alanine + di-trans,octa-cis-undecaprenyl phosphate = di-trans,octa-cis-undecaprenyl diphospho-N-acetyl-alpha-D-muramoyl-L-alanyl-D-glutamyl-meso-2,6-diaminopimeloyl-D-alanyl-D-alanine + UMP. It functions in the pathway cell wall biogenesis; peptidoglycan biosynthesis. Functionally, catalyzes the initial step of the lipid cycle reactions in the biosynthesis of the cell wall peptidoglycan: transfers peptidoglycan precursor phospho-MurNAc-pentapeptide from UDP-MurNAc-pentapeptide onto the lipid carrier undecaprenyl phosphate, yielding undecaprenyl-pyrophosphoryl-MurNAc-pentapeptide, known as lipid I. The chain is Phospho-N-acetylmuramoyl-pentapeptide-transferase from Desulforapulum autotrophicum (strain ATCC 43914 / DSM 3382 / VKM B-1955 / HRM2) (Desulfobacterium autotrophicum).